Consider the following 425-residue polypeptide: Proline iminopeptidase (425 aa).

The 264-residue stretch at 52-315 (PWLLYLQGGP…EFPALAWAQG (264 aa)) folds into the AB hydrolase-1 domain. S146 functions as the Nucleophile in the catalytic mechanism. D351 is a catalytic residue. The active-site Proton donor is the H404.

Belongs to the peptidase S33 family. In terms of assembly, homotetramer.

The protein localises to the cytoplasm. The enzyme catalyses Release of N-terminal proline from a peptide.. Its function is as follows. Higher activity toward long peptides. Acts on hydroxyproline beta-naphthylamide with almost as high an activity as on proline beta-naphthylamide. The protein is Proline iminopeptidase (pip) of Aeromonas sobria.